Consider the following 104-residue polypeptide: NADH-quinone oxidoreductase subunit K (104 aa).

The next 3 membrane-spanning stretches (helical) occupy residues 4-24, 31-51, and 67-87; these read VPAS…LFGA, VIVL…LVAF, and LFTM…LIAL.

Belongs to the complex I subunit 4L family. As to quaternary structure, NDH-1 is composed of 14 different subunits. Subunits NuoA, H, J, K, L, M, N constitute the membrane sector of the complex.

It is found in the cell membrane. The enzyme catalyses a quinone + NADH + 5 H(+)(in) = a quinol + NAD(+) + 4 H(+)(out). NDH-1 shuttles electrons from NADH, via FMN and iron-sulfur (Fe-S) centers, to quinones in the respiratory chain. The immediate electron acceptor for the enzyme in this species is believed to be a menaquinone. Couples the redox reaction to proton translocation (for every two electrons transferred, four hydrogen ions are translocated across the cytoplasmic membrane), and thus conserves the redox energy in a proton gradient. This chain is NADH-quinone oxidoreductase subunit K, found in Bacillus cereus (strain G9842).